The sequence spans 335 residues: Putative T-box protein 7 (335 aa).

Positions 73-246 (LWSTFLECGT…NNPFAKGFRN (174 aa)) form a DNA-binding region, T-box.

It localises to the nucleus. This Caenorhabditis elegans protein is Putative T-box protein 7.